A 157-amino-acid chain; its full sequence is Protein Smg homolog (157 aa).

The protein belongs to the Smg family.

This Shewanella piezotolerans (strain WP3 / JCM 13877) protein is Protein Smg homolog.